We begin with the raw amino-acid sequence, 145 residues long: Basic phospholipase A2 cPm05 (145 aa).

The N-terminal stretch at 1-21 (MYPAHLLVLLAVCISLLGASA) is a signal peptide. A propeptide spanning residues 22 to 27 (IPPLPL) is cleaved from the precursor. Disulfide bonds link C38–C98, C54–C144, C56–C72, C71–C125, C78–C118, C87–C111, and C105–C116. The Ca(2+) site is built by Y55, G57, and G59. The active site involves H75. D76 is a Ca(2+) binding site. D119 is a catalytic residue.

The protein belongs to the phospholipase A2 family. Group I subfamily. D49 sub-subfamily. Ca(2+) serves as cofactor. Expressed by the venom gland.

Its subcellular location is the secreted. The enzyme catalyses a 1,2-diacyl-sn-glycero-3-phosphocholine + H2O = a 1-acyl-sn-glycero-3-phosphocholine + a fatty acid + H(+). In terms of biological role, PLA2 catalyzes the calcium-dependent hydrolysis of the 2-acyl groups in 3-sn-phosphoglycerides. This is Basic phospholipase A2 cPm05 from Laticauda semifasciata (Black-banded sea krait).